We begin with the raw amino-acid sequence, 948 residues long: MAQQYQPGQRWISDSEAELGLGTVLAQDGRLLTVLYPATGETRQYALRNAPLTRVRFSPGDVITHFENWKMTVREVDDVDGLLVYHGLNAQNEVVTLPETQLSNFIQFRLATDRLFAGQIDQLSWFSLRYNTLEHTSRQLQSSLWGLGGVRAQPIAHQLHIAREVADRIAPRVLLADEVGLGKTIEAGLVIHRQLLSGRASRVLILVPENLQHQWLVEMRRRFNLQVALFDAERFMESDAGNPFEDTQLALVALEWLVEDEKAQDALFAAGWDLMVVDEAHHLVWHEDKASREYSLVEQLAEVIAGVLLLTATPEQLGQDSHFARLRLLDPNRFHDLKAFRAESENYRPVAQAVQELLDKGKLSAEAQETIHGFLGAEGDSLLAAVNTGDDEAKARLIRELLDRHGTGRVLFRNTRAAVQGFPERKLHQYPLPCPVEYLELPVGEHADLYPEVSFQSQPEVSEEERWWRFDPRVDWLIDTLKMLKRVKVLVICAHAETAMDLEDALRVRSGIPATVFHEGMNILERDRAAAYFADEEFGAQVLICSEIGSEGRNFQFSHHLVLFDLPSHPDLLEQRIGRLDRIGQKHTIELHVPFLETSPQARLFQWYHEALNAFLNTCPTGNALQHQFGPRLLPLLESGDDDEWQSLIDEARTERERLESELHTGRDRLLELNSGGAGEGEALVEAILEQDDQFSLPIYMETLFDAFGIDSEDHSENALILKPSEKMLDASFPLGDDEGVTITYDRNQALSREDMQFITWEHPMVQGGMDLVRSGSMGNTAVALIKNKALKPGTVLLELIYVSEVVAPRSLQLGRYLPPAALRCLLDANGNDLSSRVSFNTLNDQLESVPRASANKFIQAQRDQLTPRINAGEEKITPRHAERVAEAQRRLAADTEEELARLTALQAVNPTVRDSELVALRSQREQGLAMLEKAALRLEAIRVLVAG.

A Helicase ATP-binding domain is found at 164–332 (EVADRIAPRV…FARLRLLDPN (169 aa)). An ATP-binding site is contributed by 177 to 184 (DEVGLGKT). Positions 278 to 281 (DEAH) match the DEAH box motif. In terms of domain architecture, Helicase C-terminal spans 473-627 (RVDWLIDTLK…TCPTGNALQH (155 aa)).

Belongs to the SNF2/RAD54 helicase family. RapA subfamily. Interacts with the RNAP. Has a higher affinity for the core RNAP than for the holoenzyme. Its ATPase activity is stimulated by binding to RNAP.

Its function is as follows. Transcription regulator that activates transcription by stimulating RNA polymerase (RNAP) recycling in case of stress conditions such as supercoiled DNA or high salt concentrations. Probably acts by releasing the RNAP, when it is trapped or immobilized on tightly supercoiled DNA. Does not activate transcription on linear DNA. Probably not involved in DNA repair. This Pseudomonas savastanoi pv. phaseolicola (strain 1448A / Race 6) (Pseudomonas syringae pv. phaseolicola (strain 1448A / Race 6)) protein is RNA polymerase-associated protein RapA.